The sequence spans 183 residues: NADH-quinone oxidoreductase subunit A (183 aa).

The next 3 membrane-spanning stretches (helical) occupy residues 11-31 (IIAFVIGVTFLCVFMLTVPLL), 63-83 (FYLVAIFFVVFDLEALYLYAW), and 98-118 (VVIFVVDLLIALVYAFSVGAL). Positions 159–183 (TGQIPAQSSGRVKSKTTPALSSEKE) are disordered.

It belongs to the complex I subunit 3 family. NDH-1 is composed of 14 different subunits. Subunits NuoA, H, J, K, L, M, N constitute the membrane sector of the complex.

Its subcellular location is the cell inner membrane. It carries out the reaction a quinone + NADH + 5 H(+)(in) = a quinol + NAD(+) + 4 H(+)(out). In terms of biological role, NDH-1 shuttles electrons from NADH, via FMN and iron-sulfur (Fe-S) centers, to quinones in the respiratory chain. The immediate electron acceptor for the enzyme in this species is believed to be ubiquinone. Couples the redox reaction to proton translocation (for every two electrons transferred, four hydrogen ions are translocated across the cytoplasmic membrane), and thus conserves the redox energy in a proton gradient. The protein is NADH-quinone oxidoreductase subunit A of Acinetobacter baumannii (strain ACICU).